The chain runs to 250 residues: DNA polymerase sliding clamp (250 aa).

This sequence belongs to the PCNA family. In terms of assembly, homotrimer. The subunits circularize to form a toroid; DNA passes through its center. Replication factor C (RFC) is required to load the toroid on the DNA.

In terms of biological role, sliding clamp subunit that acts as a moving platform for DNA processing. Responsible for tethering the catalytic subunit of DNA polymerase and other proteins to DNA during high-speed replication. The sequence is that of DNA polymerase sliding clamp from Methanococcus maripaludis (strain C5 / ATCC BAA-1333).